The following is a 105-amino-acid chain: Nucleoid-associated protein lin2851 (105 aa).

A compositionally biased stretch (low complexity) spans 1–16 (MRGMGNMQGMMKQMQK). The tract at residues 1–23 (MRGMGNMQGMMKQMQKMQKEMAK) is disordered.

It belongs to the YbaB/EbfC family. Homodimer.

The protein localises to the cytoplasm. The protein resides in the nucleoid. Binds to DNA and alters its conformation. May be involved in regulation of gene expression, nucleoid organization and DNA protection. The chain is Nucleoid-associated protein lin2851 from Listeria innocua serovar 6a (strain ATCC BAA-680 / CLIP 11262).